We begin with the raw amino-acid sequence, 383 residues long: Chaperone protein DnaJ (383 aa).

One can recognise a J domain in the interval 6 to 70 (DYYDVLGVGR…QKRAAYDQYG (65 aa)). The CR-type zinc finger occupies 140 to 222 (GKETKISYSR…CHGTGREEER (83 aa)). Residues cysteine 153, cysteine 156, cysteine 170, cysteine 173, cysteine 196, cysteine 199, cysteine 210, and cysteine 213 each coordinate Zn(2+). 4 CXXCXGXG motif repeats span residues 153 to 160 (CHTCHGSG), 170 to 177 (CHKCHGAG), 196 to 203 (CDVCGGTG), and 210 to 217 (CDTCHGTG).

The protein belongs to the DnaJ family. In terms of assembly, homodimer. Zn(2+) serves as cofactor.

It localises to the cytoplasm. Participates actively in the response to hyperosmotic and heat shock by preventing the aggregation of stress-denatured proteins and by disaggregating proteins, also in an autonomous, DnaK-independent fashion. Unfolded proteins bind initially to DnaJ; upon interaction with the DnaJ-bound protein, DnaK hydrolyzes its bound ATP, resulting in the formation of a stable complex. GrpE releases ADP from DnaK; ATP binding to DnaK triggers the release of the substrate protein, thus completing the reaction cycle. Several rounds of ATP-dependent interactions between DnaJ, DnaK and GrpE are required for fully efficient folding. Also involved, together with DnaK and GrpE, in the DNA replication of plasmids through activation of initiation proteins. This chain is Chaperone protein DnaJ, found in Latilactobacillus sakei (Lactobacillus sakei).